Reading from the N-terminus, the 38-residue chain is Photosystem II reaction center protein L (38 aa).

Residues 17 to 37 form a helical membrane-spanning segment; that stretch reads SLYWGLLLIFVLAVLFSSYFF.

It belongs to the PsbL family. PSII is composed of 1 copy each of membrane proteins PsbA, PsbB, PsbC, PsbD, PsbE, PsbF, PsbH, PsbI, PsbJ, PsbK, PsbL, PsbM, PsbT, PsbX, PsbY, PsbZ, Psb30/Ycf12, at least 3 peripheral proteins of the oxygen-evolving complex and a large number of cofactors. It forms dimeric complexes.

The protein localises to the plastid. It localises to the chloroplast thylakoid membrane. One of the components of the core complex of photosystem II (PSII). PSII is a light-driven water:plastoquinone oxidoreductase that uses light energy to abstract electrons from H(2)O, generating O(2) and a proton gradient subsequently used for ATP formation. It consists of a core antenna complex that captures photons, and an electron transfer chain that converts photonic excitation into a charge separation. This subunit is found at the monomer-monomer interface and is required for correct PSII assembly and/or dimerization. The protein is Photosystem II reaction center protein L of Thalassiosira pseudonana (Marine diatom).